A 510-amino-acid chain; its full sequence is uncharacterized protein (510 aa).

Belongs to the phage portal family. PBSX subfamily.

This is an uncharacterized protein from Bacillus subtilis (strain 168).